Consider the following 438-residue polypeptide: ATP-dependent protease ATPase subunit HslU (438 aa).

ATP-binding positions include valine 18, 60–65 (GVGKTE), aspartate 252, glutamate 317, and arginine 389.

Belongs to the ClpX chaperone family. HslU subfamily. A double ring-shaped homohexamer of HslV is capped on each side by a ring-shaped HslU homohexamer. The assembly of the HslU/HslV complex is dependent on binding of ATP.

It localises to the cytoplasm. Functionally, ATPase subunit of a proteasome-like degradation complex; this subunit has chaperone activity. The binding of ATP and its subsequent hydrolysis by HslU are essential for unfolding of protein substrates subsequently hydrolyzed by HslV. HslU recognizes the N-terminal part of its protein substrates and unfolds these before they are guided to HslV for hydrolysis. The polypeptide is ATP-dependent protease ATPase subunit HslU (Saccharophagus degradans (strain 2-40 / ATCC 43961 / DSM 17024)).